Reading from the N-terminus, the 116-residue chain is Large ribosomal subunit protein bL19 (116 aa).

The protein belongs to the bacterial ribosomal protein bL19 family.

Its function is as follows. This protein is located at the 30S-50S ribosomal subunit interface and may play a role in the structure and function of the aminoacyl-tRNA binding site. In Haemophilus ducreyi (strain 35000HP / ATCC 700724), this protein is Large ribosomal subunit protein bL19.